The chain runs to 479 residues: Adenosylhomocysteinase (479 aa).

Substrate contacts are provided by T65, D145, and E205. An NAD(+)-binding site is contributed by 206-208 (TTT). 2 residues coordinate substrate: K235 and D239. NAD(+)-binding positions include N240, 269-274 (GYGDVG), E292, N327, 348-350 (IGH), and N393.

It belongs to the adenosylhomocysteinase family. Requires NAD(+) as cofactor.

The protein localises to the cytoplasm. The enzyme catalyses S-adenosyl-L-homocysteine + H2O = L-homocysteine + adenosine. Its pathway is amino-acid biosynthesis; L-homocysteine biosynthesis; L-homocysteine from S-adenosyl-L-homocysteine: step 1/1. Functionally, may play a key role in the regulation of the intracellular concentration of adenosylhomocysteine. This chain is Adenosylhomocysteinase, found in Janthinobacterium sp. (strain Marseille) (Minibacterium massiliensis).